Reading from the N-terminus, the 183-residue chain is ATP synthase subunit b, chloroplastic (183 aa).

The helical transmembrane segment at 27–49 threads the bilayer; that stretch reads LATNLINLTVVVGVLIYFGKGVL.

The protein belongs to the ATPase B chain family. F-type ATPases have 2 components, F(1) - the catalytic core - and F(0) - the membrane proton channel. F(1) has five subunits: alpha(3), beta(3), gamma(1), delta(1), epsilon(1). F(0) has four main subunits: a(1), b(1), b'(1) and c(10-14). The alpha and beta chains form an alternating ring which encloses part of the gamma chain. F(1) is attached to F(0) by a central stalk formed by the gamma and epsilon chains, while a peripheral stalk is formed by the delta, b and b' chains.

The protein localises to the plastid. The protein resides in the chloroplast thylakoid membrane. Functionally, f(1)F(0) ATP synthase produces ATP from ADP in the presence of a proton or sodium gradient. F-type ATPases consist of two structural domains, F(1) containing the extramembraneous catalytic core and F(0) containing the membrane proton channel, linked together by a central stalk and a peripheral stalk. During catalysis, ATP synthesis in the catalytic domain of F(1) is coupled via a rotary mechanism of the central stalk subunits to proton translocation. In terms of biological role, component of the F(0) channel, it forms part of the peripheral stalk, linking F(1) to F(0). This chain is ATP synthase subunit b, chloroplastic, found in Oryza nivara (Indian wild rice).